A 48-amino-acid chain; its full sequence is Large ribosomal subunit protein bL33 (48 aa).

It belongs to the bacterial ribosomal protein bL33 family.

This is Large ribosomal subunit protein bL33 from Streptococcus mutans serotype c (strain ATCC 700610 / UA159).